We begin with the raw amino-acid sequence, 215 residues long: Large ribosomal subunit protein eL15 (215 aa).

Residues 179-215 are disordered; the sequence is GTVKHKWKKKEKEREQKKRHEATKYYRLQNYDKLPGK. Basic and acidic residues predominate over residues 188–202; that stretch reads KEKEREQKKRHEATK.

Belongs to the eukaryotic ribosomal protein eL15 family.

This is Large ribosomal subunit protein eL15 from Sulfurisphaera tokodaii (strain DSM 16993 / JCM 10545 / NBRC 100140 / 7) (Sulfolobus tokodaii).